Reading from the N-terminus, the 466-residue chain is Cysteine--tRNA ligase (466 aa).

C33 serves as a coordination point for Zn(2+). Residues 35 to 45 carry the 'HIGH' region motif; sequence PTVYDYAHIGN. Zn(2+) is bound by residues C221, H246, and E250. A 'KMSKS' region motif is present at residues 279–283; that stretch reads KMSKS. Residue K282 participates in ATP binding.

Belongs to the class-I aminoacyl-tRNA synthetase family. In terms of assembly, monomer. The cofactor is Zn(2+).

It localises to the cytoplasm. The enzyme catalyses tRNA(Cys) + L-cysteine + ATP = L-cysteinyl-tRNA(Cys) + AMP + diphosphate. In Rhizobium meliloti (strain 1021) (Ensifer meliloti), this protein is Cysteine--tRNA ligase.